The following is a 156-amino-acid chain: Cyclic pyranopterin monophosphate synthase (156 aa).

Residues 75–77 and 111–112 contribute to the substrate site; these read LCH and ME. Residue aspartate 126 is part of the active site.

This sequence belongs to the MoaC family. In terms of assembly, homohexamer; trimer of dimers.

It catalyses the reaction (8S)-3',8-cyclo-7,8-dihydroguanosine 5'-triphosphate = cyclic pyranopterin phosphate + diphosphate. Its pathway is cofactor biosynthesis; molybdopterin biosynthesis. Functionally, catalyzes the conversion of (8S)-3',8-cyclo-7,8-dihydroguanosine 5'-triphosphate to cyclic pyranopterin monophosphate (cPMP). This is Cyclic pyranopterin monophosphate synthase from Erythrobacter litoralis (strain HTCC2594).